We begin with the raw amino-acid sequence, 173 residues long: Alpha-crystallin A chain (173 aa).

Methionine 1 carries the post-translational modification N-acetylmethionine. Residues 1–63 (MDIAIQHPWF…RSVLDSGISE (63 aa)) are required for complex formation with BFSP1 and BFSP2. Glutamine 6 bears the Deamidated glutamine; partial mark. Serine 45 carries the phosphoserine modification. The residue at position 50 (glutamine 50) is a Deamidated glutamine; partial. The sHSP domain occupies 52-162 (LFRSVLDSGI…GHSERAIPVS (111 aa)). Lysine 70 is modified (N6-acetyllysine). A Deamidated glutamine; partial modification is found at glutamine 90. Lysine 99 carries the post-translational modification N6-acetyllysine. Histidine 100 is a Zn(2+) binding site. Position 101 is a deamidated asparagine; partial (asparagine 101). The Zn(2+) site is built by glutamate 102 and histidine 107. Serine 122 is subject to Phosphoserine. At asparagine 123 the chain carries Deamidated asparagine; partial. The segment at 144-173 (PKVTSGMDAGHSERAIPVSREEKPSSAPSS) is disordered. The segment covering 153–167 (GHSERAIPVSREEKP) has biased composition (basic and acidic residues). Histidine 154 provides a ligand contact to Zn(2+). Serine 162 carries O-linked (GlcNAc) serine glycosylation.

Belongs to the small heat shock protein (HSP20) family. Heteromer composed of three CRYAA and one CRYAB subunits. Inter-subunit bridging via zinc ions enhances stability, which is crucial as there is no protein turn over in the lens. Can also form homodimers and homotetramers (dimers of dimers) which serve as the building blocks of homooligomers. Within homooligomers, the zinc-binding motif is created from residues of 3 different molecules. His-100 and Glu-102 from one molecule are ligands of the zinc ion, and His-107 and His-154 residues from additional molecules complete the site with tetrahedral coordination geometry. Part of a complex required for lens intermediate filament formation composed of BFSP1, BFSP2 and CRYAA. In terms of processing, acetylation at Lys-70 may increase chaperone activity. Post-translationally, undergoes age-dependent proteolytical cleavage at the C-terminus.

The protein localises to the cytoplasm. Its subcellular location is the nucleus. In terms of biological role, contributes to the transparency and refractive index of the lens. Acts as a chaperone, preventing aggregation of various proteins under a wide range of stress conditions. Required for the correct formation of lens intermediate filaments as part of a complex composed of BFSP1, BFSP2 and CRYAA. The protein is Alpha-crystallin A chain (CRYAA) of Phocoena phocoena (Harbor porpoise).